A 109-amino-acid polypeptide reads, in one-letter code: Ribulose bisphosphate carboxylase small subunit (109 aa).

Belongs to the RuBisCO small chain family. In terms of assembly, heterohexadecamer of 8 large and 8 small subunits.

Its subcellular location is the carboxysome. Functionally, ruBisCO catalyzes two reactions: the carboxylation of D-ribulose 1,5-bisphosphate, the primary event in carbon dioxide fixation, as well as the oxidative fragmentation of the pentose substrate in the photorespiration process. Both reactions occur simultaneously and in competition at the same active site. Although the small subunit is not catalytic it is essential for maximal activity. In Prochlorothrix hollandica, this protein is Ribulose bisphosphate carboxylase small subunit.